A 413-amino-acid chain; its full sequence is Arginine biosynthesis bifunctional protein ArgJ (413 aa).

Residues T158, K184, T195, E285, N408, and S413 each contribute to the substrate site. The active-site Nucleophile is T195.

The protein belongs to the ArgJ family. In terms of assembly, heterotetramer of two alpha and two beta chains.

It localises to the cytoplasm. The catalysed reaction is N(2)-acetyl-L-ornithine + L-glutamate = N-acetyl-L-glutamate + L-ornithine. It catalyses the reaction L-glutamate + acetyl-CoA = N-acetyl-L-glutamate + CoA + H(+). It participates in amino-acid biosynthesis; L-arginine biosynthesis; L-ornithine and N-acetyl-L-glutamate from L-glutamate and N(2)-acetyl-L-ornithine (cyclic): step 1/1. Its pathway is amino-acid biosynthesis; L-arginine biosynthesis; N(2)-acetyl-L-ornithine from L-glutamate: step 1/4. Its function is as follows. Catalyzes two activities which are involved in the cyclic version of arginine biosynthesis: the synthesis of N-acetylglutamate from glutamate and acetyl-CoA as the acetyl donor, and of ornithine by transacetylation between N(2)-acetylornithine and glutamate. This chain is Arginine biosynthesis bifunctional protein ArgJ, found in Brucella melitensis biotype 1 (strain ATCC 23456 / CCUG 17765 / NCTC 10094 / 16M).